The sequence spans 917 residues: Translation initiation factor IF-2 (917 aa).

The tract at residues 1-312 is disordered; that stretch reads MEEQKSIKET…KGGREENENT (312 aa). A compositionally biased stretch (basic residues) spans 20–30; that stretch reads TKKKLVIKKKA. Polar residues predominate over residues 41–59; that stretch reads PGAQGQTTATEAKQSSPAS. Composition is skewed to basic and acidic residues over residues 60–76 and 95–118; these read SDKK…EAKR and RPDR…RKPE. 3 stretches are compositionally biased toward gly residues: residues 132-141, 167-256, and 281-293; these read SGGGQGGGNQ, QTGG…GYQG, and APGG…GPGG. The span at 297–312 shows a compositional bias: basic and acidic residues; it reads RVFDKEKGGREENENT. Positions 414 to 587 constitute a tr-type G domain; the sequence is TRPPVVTIMG…ELLDHKANPK (174 aa). The segment at 423–430 is G1; the sequence is GHVDHGKT. 423–430 is a GTP binding site; that stretch reads GHVDHGKT. Residues 448-452 form a G2 region; it reads GITQH. The interval 469 to 472 is G3; it reads DTPG. GTP is bound by residues 469-473 and 523-526; these read DTPGH and NKID. Residues 523 to 526 are G4; sequence NKID. The interval 559–561 is G5; that stretch reads SAK.

This sequence belongs to the TRAFAC class translation factor GTPase superfamily. Classic translation factor GTPase family. IF-2 subfamily.

The protein localises to the cytoplasm. One of the essential components for the initiation of protein synthesis. Protects formylmethionyl-tRNA from spontaneous hydrolysis and promotes its binding to the 30S ribosomal subunits. Also involved in the hydrolysis of GTP during the formation of the 70S ribosomal complex. In Leptospira biflexa serovar Patoc (strain Patoc 1 / ATCC 23582 / Paris), this protein is Translation initiation factor IF-2.